Here is a 74-residue protein sequence, read N- to C-terminus: DNA-directed RNA polymerase subunit omega (74 aa).

It belongs to the RNA polymerase subunit omega family. As to quaternary structure, the RNAP catalytic core consists of 2 alpha, 1 beta, 1 beta' and 1 omega subunit. When a sigma factor is associated with the core the holoenzyme is formed, which can initiate transcription.

It catalyses the reaction RNA(n) + a ribonucleoside 5'-triphosphate = RNA(n+1) + diphosphate. Functionally, promotes RNA polymerase assembly. Latches the N- and C-terminal regions of the beta' subunit thereby facilitating its interaction with the beta and alpha subunits. The polypeptide is DNA-directed RNA polymerase subunit omega (Hydrogenovibrio crunogenus (strain DSM 25203 / XCL-2) (Thiomicrospira crunogena)).